Reading from the N-terminus, the 448-residue chain is Damage-control phosphatase ARMT1 (448 aa).

Residues Asp257 and Asn258 each contribute to the Mn(2+) site. 257–258 (DN) serves as a coordination point for substrate. Residues Glu262 and Asp295 each coordinate S-adenosyl-L-methionine. Asp295 is a Mn(2+) binding site. Substrate-binding positions include 371–375 (DLNYR) and Lys408. The Subfamily III RTxK motif signature appears at 405-408 (RTLK).

Belongs to the damage-control phosphatase family. Sugar phosphate phosphatase III subfamily. The cofactor is Mn(2+). Requires Ni(2+) as cofactor. In terms of processing, automethylated.

The catalysed reaction is beta-D-fructose 1-phosphate + H2O = D-fructose + phosphate. It carries out the reaction beta-D-fructose 6-phosphate = dihydroxyacetone + D-glyceraldehyde 3-phosphate. The enzyme catalyses L-glutamyl-[protein] + S-adenosyl-L-methionine = [protein]-L-glutamate 5-O-methyl ester + S-adenosyl-L-homocysteine. In terms of biological role, metal-dependent phosphatase that shows phosphatase activity against several substrates, including fructose-1-phosphate and fructose-6-phosphate. Its preference for fructose-1-phosphate, a strong glycating agent that causes DNA damage rather than a canonical yeast metabolite, suggests a damage-control function in hexose phosphate metabolism. Has also been shown to have O-methyltransferase activity that methylates glutamate residues of target proteins to form gamma-glutamyl methyl ester residues. Possibly methylates PCNA, suggesting it is involved in the DNA damage response. The chain is Damage-control phosphatase ARMT1 from Danio rerio (Zebrafish).